A 98-amino-acid polypeptide reads, in one-letter code: UPF0235 protein Pmen_4153 (98 aa).

Belongs to the UPF0235 family.

The sequence is that of UPF0235 protein Pmen_4153 from Ectopseudomonas mendocina (strain ymp) (Pseudomonas mendocina).